The primary structure comprises 476 residues: 3-ketoacyl-CoA synthase 12 (476 aa).

The signal sequence occupies residues 1-25 (MDLLFLFFSLLLSYLFFKIWKLIDS). The region spanning 26–313 (KQDKDCYILD…FMLKLLIKKI (288 aa)) is the FAE domain. Active-site residues include Cys-168, His-247, His-344, His-348, His-377, and Asn-381.

Belongs to the thiolase-like superfamily. Chalcone/stilbene synthases family. In terms of tissue distribution, expressed in siliques, flowers and leaves.

The protein localises to the endoplasmic reticulum. It catalyses the reaction a very-long-chain acyl-CoA + malonyl-CoA + H(+) = a very-long-chain 3-oxoacyl-CoA + CO2 + CoA. The protein operates within lipid metabolism; fatty acid biosynthesis. This Arabidopsis thaliana (Mouse-ear cress) protein is 3-ketoacyl-CoA synthase 12.